The primary structure comprises 365 residues: Chorismate synthase (365 aa).

Residues Arg48 and Arg54 each contribute to the NADP(+) site. FMN-binding positions include 129-131 (RSS), 241-242 (NA), Gly285, 300-304 (KPTSS), and Arg326.

It belongs to the chorismate synthase family. In terms of assembly, homotetramer. FMNH2 serves as cofactor.

The enzyme catalyses 5-O-(1-carboxyvinyl)-3-phosphoshikimate = chorismate + phosphate. Its pathway is metabolic intermediate biosynthesis; chorismate biosynthesis; chorismate from D-erythrose 4-phosphate and phosphoenolpyruvate: step 7/7. Catalyzes the anti-1,4-elimination of the C-3 phosphate and the C-6 proR hydrogen from 5-enolpyruvylshikimate-3-phosphate (EPSP) to yield chorismate, which is the branch point compound that serves as the starting substrate for the three terminal pathways of aromatic amino acid biosynthesis. This reaction introduces a second double bond into the aromatic ring system. In Parvibaculum lavamentivorans (strain DS-1 / DSM 13023 / NCIMB 13966), this protein is Chorismate synthase.